The chain runs to 131 residues: Holo-[acyl-carrier-protein] synthase (131 aa).

Mg(2+) contacts are provided by D6 and E55.

This sequence belongs to the P-Pant transferase superfamily. AcpS family. Requires Mg(2+) as cofactor.

It is found in the cytoplasm. The catalysed reaction is apo-[ACP] + CoA = holo-[ACP] + adenosine 3',5'-bisphosphate + H(+). Its function is as follows. Transfers the 4'-phosphopantetheine moiety from coenzyme A to a Ser of acyl-carrier-protein. The polypeptide is Holo-[acyl-carrier-protein] synthase (Verminephrobacter eiseniae (strain EF01-2)).